Here is a 350-residue protein sequence, read N- to C-terminus: tRNA uridine(34) hydroxylase (350 aa).

The Rhodanese domain maps to 146–240 (DDPDAVFIDM…YARRAREQGL (95 aa)). Cysteine 200 functions as the Cysteine persulfide intermediate in the catalytic mechanism. Residues 319–328 (RRRRAGRENG) are compositionally biased toward basic and acidic residues. Residues 319–350 (RRRRAGRENGNKIFNKSRGRLNSKLSIPDPAE) are disordered.

The protein belongs to the TrhO family.

It catalyses the reaction uridine(34) in tRNA + AH2 + O2 = 5-hydroxyuridine(34) in tRNA + A + H2O. In terms of biological role, catalyzes oxygen-dependent 5-hydroxyuridine (ho5U) modification at position 34 in tRNAs. The sequence is that of tRNA uridine(34) hydroxylase from Salmonella typhi.